The chain runs to 76 residues: Membrane protein UL43 homolog (76 aa).

The next 2 helical transmembrane spans lie at 7–27 (AVCVVLAAFGYWVAAPISLAF) and 54–74 (ISRWLIVSVYVAAGLCYATII).

Belongs to the alphaherpesvirinae HHV-1 UL43 family.

The protein localises to the membrane. This Equus caballus (Horse) protein is Membrane protein UL43 homolog.